The following is a 120-amino-acid chain: MFLLYEYDFFWAFLIISILVPILAFFISGVLAPISKGPEKLSTYESGIEPMGDAWLQFRIRYYMFALVFVVFDVETVFLYPWAMSFDVLGVSVFIEAFIFVLILIIGLVYAWRKGALEWS.

Helical transmembrane passes span 9–29 (FFWAFLIISILVPILAFFISG), 64–84 (MFALVFVVFDVETVFLYPWAM), and 88–108 (VLGVSVFIEAFIFVLILIIGL).

Belongs to the complex I subunit 3 family. In terms of assembly, NDH is composed of at least 16 different subunits, 5 of which are encoded in the nucleus.

It is found in the plastid. The protein resides in the chloroplast thylakoid membrane. The catalysed reaction is a plastoquinone + NADH + (n+1) H(+)(in) = a plastoquinol + NAD(+) + n H(+)(out). It carries out the reaction a plastoquinone + NADPH + (n+1) H(+)(in) = a plastoquinol + NADP(+) + n H(+)(out). Its function is as follows. NDH shuttles electrons from NAD(P)H:plastoquinone, via FMN and iron-sulfur (Fe-S) centers, to quinones in the photosynthetic chain and possibly in a chloroplast respiratory chain. The immediate electron acceptor for the enzyme in this species is believed to be plastoquinone. Couples the redox reaction to proton translocation, and thus conserves the redox energy in a proton gradient. This is NAD(P)H-quinone oxidoreductase subunit 3, chloroplastic from Atropa belladonna (Belladonna).